Here is a 227-residue protein sequence, read N- to C-terminus: UPF0441 protein YPO0661/y3517/YP_2976 (227 aa).

The disordered stretch occupies residues 198–227 (GGFGESVAKQSSMQRSAATSSKTTTRSMGG). The segment covering 212 to 227 (RSAATSSKTTTRSMGG) has biased composition (low complexity).

It belongs to the UPF0441 family.

This Yersinia pestis protein is UPF0441 protein YPO0661/y3517/YP_2976.